Consider the following 307-residue polypeptide: Homoserine kinase (307 aa).

Position 92–102 (92–102) interacts with ATP; it reads PLARGLGSSAT.

The protein belongs to the GHMP kinase family. Homoserine kinase subfamily.

Its subcellular location is the cytoplasm. The enzyme catalyses L-homoserine + ATP = O-phospho-L-homoserine + ADP + H(+). The protein operates within amino-acid biosynthesis; L-threonine biosynthesis; L-threonine from L-aspartate: step 4/5. Functionally, catalyzes the ATP-dependent phosphorylation of L-homoserine to L-homoserine phosphate. The protein is Homoserine kinase (thrB) of Microchaete diplosiphon (Fremyella diplosiphon).